Reading from the N-terminus, the 204-residue chain is Glycerol-3-phosphate acyltransferase (204 aa).

5 helical membrane-spanning segments follow: residues 8-28 (ILIF…CYIF), 53-73 (VPAA…VVIA), 81-101 (FITA…IFFG), 116-136 (FGFS…VAII), and 155-175 (VIFT…IIIL).

This sequence belongs to the PlsY family. In terms of assembly, probably interacts with PlsX.

Its subcellular location is the cell inner membrane. The enzyme catalyses an acyl phosphate + sn-glycerol 3-phosphate = a 1-acyl-sn-glycero-3-phosphate + phosphate. It functions in the pathway lipid metabolism; phospholipid metabolism. Functionally, catalyzes the transfer of an acyl group from acyl-phosphate (acyl-PO(4)) to glycerol-3-phosphate (G3P) to form lysophosphatidic acid (LPA). This enzyme utilizes acyl-phosphate as fatty acyl donor, but not acyl-CoA or acyl-ACP. The sequence is that of Glycerol-3-phosphate acyltransferase from Francisella tularensis subsp. tularensis (strain FSC 198).